The chain runs to 587 residues: Kelch-like protein 3 (587 aa).

Residue Ser-10 is modified to Phosphoserine. Residues 50–117 enclose the BTB domain; the sequence is CDVMIVAEDV…IYTAEIEVTE (68 aa). The BACK domain occupies 152-254; the sequence is CLGIRAFADV…PRDYLVQTVE (103 aa). The residue at position 295 (Thr-295) is a Phosphothreonine. 6 Kelch repeats span residues 302–347, 348–394, 396–441, 442–490, 491–537, and 539–585; these read VMIV…FMAG, HVYA…VLND, LYAV…VVEG, KLYA…VLSG, QLYA…AVNG, and LYVV…VIHK. Position 375 is a phosphothreonine (Thr-375). Ser-376 carries the post-translational modification Phosphoserine. A Phosphoserine; by PKA and PKC modification is found at Ser-433.

The protein belongs to the KLHL3 family. Homodimer. Component of the BCR(KLHL3) E3 ubiquitin ligase complex, at least composed of CUL3 and KLHL3 and RBX1. Interacts with CLDN8. Phosphorylation at Ser-433 by PKA or PKC decreases the interaction with WNK1 and WNK4, leading to inhibit their degradation by the BCR(KLHL3) complex. Phosphorylated at Ser-433 by PKC in response to angiotensin II signaling, decreasing ability to promote degradation of WNK1 and WNK4, leading to activation of Na-Cl cotransporter SLC12A3/NCC. Phosphorylation at Ser-433 is increased by insulin. Dephosphorylated at Ser-433 by calcineurin PPP3CA, promoting degradation of WNK1 and WNK4. In terms of tissue distribution, widely expressed.

The protein resides in the cytoplasm. Its subcellular location is the cytosol. It is found in the cytoskeleton. It functions in the pathway protein modification; protein ubiquitination. In terms of biological role, substrate-specific adapter of a BCR (BTB-CUL3-RBX1) E3 ubiquitin ligase complex that acts as a regulator of ion transport in the distal nephron. The BCR(KLHL3) complex acts by mediating ubiquitination and degradation of WNK1 and WNK4, two activators of Na-Cl cotransporter SLC12A3/NCC in distal convoluted tubule cells of kidney, thereby regulating NaCl reabsorption. The BCR(KLHL3) complex also mediates ubiquitination and degradation of WNK3. The BCR(KLHL3) complex also mediates ubiquitination of CLDN8, a tight-junction protein required for paracellular chloride transport in the kidney, leading to its degradation. The polypeptide is Kelch-like protein 3 (Homo sapiens (Human)).